Reading from the N-terminus, the 336-residue chain is Protein-glutamate methylesterase/protein-glutamine glutaminase 2 (336 aa).

The Response regulatory domain maps to 2 to 119 (KIAIVNDMPM…PNPKEAAAPL (118 aa)). A 4-aspartylphosphate modification is found at aspartate 53. Residues 147–336 (PSRRDRLVAI…APRLIEVFTQ (190 aa)) enclose the CheB-type methylesterase domain. Catalysis depends on residues serine 159, histidine 186, and aspartate 279.

It belongs to the CheB family. Post-translationally, phosphorylated by CheA. Phosphorylation of the N-terminal regulatory domain activates the methylesterase activity.

The protein localises to the cytoplasm. The enzyme catalyses [protein]-L-glutamate 5-O-methyl ester + H2O = L-glutamyl-[protein] + methanol + H(+). It catalyses the reaction L-glutaminyl-[protein] + H2O = L-glutamyl-[protein] + NH4(+). Functionally, involved in chemotaxis. Part of a chemotaxis signal transduction system that modulates chemotaxis in response to various stimuli. Catalyzes the demethylation of specific methylglutamate residues introduced into the chemoreceptors (methyl-accepting chemotaxis proteins or MCP) by CheR. Also mediates the irreversible deamidation of specific glutamine residues to glutamic acid. The sequence is that of Protein-glutamate methylesterase/protein-glutamine glutaminase 2 from Pseudomonas syringae pv. syringae (strain B728a).